Reading from the N-terminus, the 86-residue chain is RNA-binding protein Hfq (86 aa).

Residues Asp9–Ile68 enclose the Sm domain.

This sequence belongs to the Hfq family. In terms of assembly, homohexamer.

Its function is as follows. RNA chaperone that binds small regulatory RNA (sRNAs) and mRNAs to facilitate mRNA translational regulation in response to envelope stress, environmental stress and changes in metabolite concentrations. Also binds with high specificity to tRNAs. The protein is RNA-binding protein Hfq of Pseudomonas fluorescens (strain Pf0-1).